The following is a 263-amino-acid chain: Type III pantothenate kinase (263 aa).

Residue 14-21 coordinates ATP; it reads DIGNTSVN. Substrate is bound at residue 115 to 118; it reads GADR. The active-site Proton acceptor is Asp-117. Residue Asp-137 participates in K(+) binding. ATP is bound at residue Thr-140. Thr-192 contributes to the substrate binding site.

It belongs to the type III pantothenate kinase family. In terms of assembly, homodimer. NH4(+) serves as cofactor. It depends on K(+) as a cofactor.

The protein resides in the cytoplasm. It carries out the reaction (R)-pantothenate + ATP = (R)-4'-phosphopantothenate + ADP + H(+). The protein operates within cofactor biosynthesis; coenzyme A biosynthesis; CoA from (R)-pantothenate: step 1/5. Catalyzes the phosphorylation of pantothenate (Pan), the first step in CoA biosynthesis. The polypeptide is Type III pantothenate kinase (Dehalococcoides mccartyi (strain ATCC BAA-2100 / JCM 16839 / KCTC 5957 / BAV1)).